The sequence spans 306 residues: Curved DNA-binding protein (306 aa).

The J domain occupies 5 to 69 (DYYAIMGVKP…QRRAEYDQMW (65 aa)).

Its subcellular location is the cytoplasm. It is found in the nucleoid. Functionally, DNA-binding protein that preferentially recognizes a curved DNA sequence. It is probably a functional analog of DnaJ; displays overlapping activities with DnaJ, but functions under different conditions, probably acting as a molecular chaperone in an adaptive response to environmental stresses other than heat shock. Lacks autonomous chaperone activity; binds native substrates and targets them for recognition by DnaK. Its activity is inhibited by the binding of CbpM. The protein is Curved DNA-binding protein of Escherichia coli O17:K52:H18 (strain UMN026 / ExPEC).